The sequence spans 445 residues: MSELTKELMELVWGTNSSPGLSDTIFCRWTQGFVFSESEGSALEQFEGGPCAVIAPVQAFLLKKLLFSSEKSSWRDCPEEERKELLCHTLCDILESAGCDNSGSYCLVSWLRGKTTEETASLSGSPAQSSCQVEHSSALAVEELGFERFHALIQKRSFRSLAELRDAVLDQYSMWGNKFGVLLFLYSVLLTKGIENIKNEIEDSSEPLIDPVYGHGSQSLINLLLTGHAVSNVWDGDRECSGMKLLGIHEQAAVGFLTLMEALRYCKVGSYLKSPKFPIWIVGSETHLTVFFAKDMALVAPEAPSEQARRVFQTYDPEDNGFIPDSLLEDVMKALDLVSDPEYINLMKNKLDPEGLGIILLGPFLQEFFPDQGSSGPESFTVYHYNGLKQSNYNEKVMYVEGTAVVMGFEDPLLQTDDTPIKRCLQTKWPYIELLWTTDRSPSLN.

Catalysis depends on C51, which acts as the Nucleophile. S125 bears the Phosphoserine mark. The active-site Proton acceptor is the H287.

This sequence belongs to the MINDY deubiquitinase family. FAM188 subfamily. Interacts with COPS5.

The protein localises to the nucleus. It carries out the reaction Thiol-dependent hydrolysis of ester, thioester, amide, peptide and isopeptide bonds formed by the C-terminal Gly of ubiquitin (a 76-residue protein attached to proteins as an intracellular targeting signal).. Its function is as follows. Hydrolase that can remove 'Lys-48'-linked conjugated ubiquitin from proteins. The polypeptide is Ubiquitin carboxyl-terminal hydrolase MINDY-3 (MINDY3) (Bos taurus (Bovine)).